Reading from the N-terminus, the 119-residue chain is Large ribosomal subunit protein bL20 (119 aa).

It belongs to the bacterial ribosomal protein bL20 family.

In terms of biological role, binds directly to 23S ribosomal RNA and is necessary for the in vitro assembly process of the 50S ribosomal subunit. It is not involved in the protein synthesizing functions of that subunit. This is Large ribosomal subunit protein bL20 from Delftia acidovorans (strain DSM 14801 / SPH-1).